A 100-amino-acid polypeptide reads, in one-letter code: Large ribosomal subunit protein uL23 (100 aa).

Belongs to the universal ribosomal protein uL23 family. Part of the 50S ribosomal subunit. Contacts protein L29, and trigger factor when it is bound to the ribosome.

In terms of biological role, one of the early assembly proteins it binds 23S rRNA. One of the proteins that surrounds the polypeptide exit tunnel on the outside of the ribosome. Forms the main docking site for trigger factor binding to the ribosome. This Mycolicibacterium smegmatis (strain ATCC 700084 / mc(2)155) (Mycobacterium smegmatis) protein is Large ribosomal subunit protein uL23.